Here is a 413-residue protein sequence, read N- to C-terminus: Serine/threonine transporter SstT (413 aa).

9 consecutive transmembrane segments (helical) span residues 11–31, 43–63, 82–102, 141–161, 192–212, 216–236, 298–318, 339–359, and 363–383; these read IANG…VILA, FLGS…VFVL, IIGL…LFSF, ALLT…GITM, IGIF…ALAG, LLMV…PIIV, MGGA…TLGI, ASGV…LFGI, and VAMQ…SAET.

The protein belongs to the dicarboxylate/amino acid:cation symporter (DAACS) (TC 2.A.23) family.

It localises to the cell inner membrane. It catalyses the reaction L-serine(in) + Na(+)(in) = L-serine(out) + Na(+)(out). The catalysed reaction is L-threonine(in) + Na(+)(in) = L-threonine(out) + Na(+)(out). Its function is as follows. Involved in the import of serine and threonine into the cell, with the concomitant import of sodium (symport system). The protein is Serine/threonine transporter SstT of Shewanella frigidimarina (strain NCIMB 400).